A 169-amino-acid chain; its full sequence is Anaerobic nitrite reductase NSHB3 (169 aa).

The region spanning 15–165 (RFTEEQEALV…LVAAIKQGMK (151 aa)) is the Globin domain. The Homodimerization motif lies at 48 to 52 (EVAPS). Positions 58, 72, 76, 106, 110, and 111 each coordinate heme b. A Homodimerization motif is present at residues 118–130 (DAHFEVAKFALLE).

This sequence belongs to the plant globin family. In terms of assembly, homodimer. It depends on heme b as a cofactor.

The protein resides in the cytoplasm. It localises to the nucleus. It catalyses the reaction Fe(III)-heme b-[protein] + nitric oxide + H2O = Fe(II)-heme b-[protein] + nitrite + 2 H(+). In terms of biological role, phytoglobin that reduces nitrite to nitric oxide under anoxic conditions (e.g. during flooding or in waterlogged soil). May not function as an oxygen storage or transport protein. Has an unusually high affinity for O(2) through an hexacoordinate heme iron because of a very low dissociation constant. The polypeptide is Anaerobic nitrite reductase NSHB3 (Oryza sativa subsp. indica (Rice)).